Reading from the N-terminus, the 372-residue chain is sn-glycerol-3-phosphate import ATP-binding protein UgpC (372 aa).

An ABC transporter domain is found at 2–233 (LDIKQLVKTY…PASTFVASFI (232 aa)). 35 to 42 (GPSGCGKS) provides a ligand contact to ATP.

The protein belongs to the ABC transporter superfamily. sn-glycerol-3-phosphate importer (TC 3.A.1.1.3) family. The complex is composed of two ATP-binding proteins (UgpC), two transmembrane proteins (UgpA and UgpE) and a solute-binding protein (UgpB).

The protein resides in the cell inner membrane. The catalysed reaction is sn-glycerol 3-phosphate(out) + ATP + H2O = sn-glycerol 3-phosphate(in) + ADP + phosphate + H(+). Functionally, part of the ABC transporter complex UgpBAEC involved in sn-glycerol-3-phosphate (G3P) import. Responsible for energy coupling to the transport system. The sequence is that of sn-glycerol-3-phosphate import ATP-binding protein UgpC from Vibrio cholerae serotype O1 (strain ATCC 39315 / El Tor Inaba N16961).